Consider the following 151-residue polypeptide: UPF0208 membrane protein Ent638_2839 (151 aa).

2 helical membrane-spanning segments follow: residues 46–65 and 69–91; these read YAIR…QIAL and LGPA…WWLG.

Belongs to the UPF0208 family.

The protein localises to the cell inner membrane. The polypeptide is UPF0208 membrane protein Ent638_2839 (Enterobacter sp. (strain 638)).